Here is a 170-residue protein sequence, read N- to C-terminus: Transcriptional repressor NrdR (170 aa).

A zinc finger lies at C3 to C34. Positions L46–D136 constitute an ATP-cone domain. The disordered stretch occupies residues E151 to R170.

This sequence belongs to the NrdR family. Requires Zn(2+) as cofactor.

Negatively regulates transcription of bacterial ribonucleotide reductase nrd genes and operons by binding to NrdR-boxes. The protein is Transcriptional repressor NrdR of Acidothermus cellulolyticus (strain ATCC 43068 / DSM 8971 / 11B).